The primary structure comprises 313 residues: Biotin synthase (313 aa).

The region spanning 38 to 262 (REVQISTLLS…TMPHARVRLS (225 aa)) is the Radical SAM core domain. 3 residues coordinate [4Fe-4S] cluster: Cys53, Cys57, and Cys60. Positions 97, 128, 188, and 260 each coordinate [2Fe-2S] cluster.

The protein belongs to the radical SAM superfamily. Biotin synthase family. In terms of assembly, homodimer. Requires [4Fe-4S] cluster as cofactor. It depends on [2Fe-2S] cluster as a cofactor.

The enzyme catalyses (4R,5S)-dethiobiotin + (sulfur carrier)-SH + 2 reduced [2Fe-2S]-[ferredoxin] + 2 S-adenosyl-L-methionine = (sulfur carrier)-H + biotin + 2 5'-deoxyadenosine + 2 L-methionine + 2 oxidized [2Fe-2S]-[ferredoxin]. It functions in the pathway cofactor biosynthesis; biotin biosynthesis; biotin from 7,8-diaminononanoate: step 2/2. In terms of biological role, catalyzes the conversion of dethiobiotin (DTB) to biotin by the insertion of a sulfur atom into dethiobiotin via a radical-based mechanism. The sequence is that of Biotin synthase from Granulibacter bethesdensis (strain ATCC BAA-1260 / CGDNIH1).